Reading from the N-terminus, the 192-residue chain is Casparian strip membrane protein 4 (192 aa).

Residues 1-29 (MTKDVVIEHGESSKAPLVPAPVAAGVGRA) are Cytoplasmic-facing. The helical transmembrane segment at 30–50 (VSIADVFLRFLSIVATIASAI) threads the bilayer. At 51–79 (SMGTTNETLPFFTQFIQFEAKYSDLPSFT) the chain is on the extracellular side. An N-linked (GlcNAc...) asparagine glycan is attached at Asn-56. The helical transmembrane segment at 80–100 (FFVAANAVVCTYLVLSIPLSI) threads the bilayer. Residues 101 to 112 (VHIIRPRARYSR) lie on the Cytoplasmic side of the membrane. Residues 113-133 (LILVFFDAVMLALLTAGASAA) traverse the membrane as a helical segment. Over 134-166 (AAIVYLAHKGNVRANWFAICQQFDSFCERISGS) the chain is Extracellular. The chain crosses the membrane as a helical span at residues 167 to 187 (LIGSFAAMVLLIVLIFLSAFA). At 188–192 (LARRH) the chain is on the cytoplasmic side.

The protein belongs to the Casparian strip membrane proteins (CASP) family. In terms of assembly, homodimer and heterodimers.

It is found in the cell membrane. In terms of biological role, regulates membrane-cell wall junctions and localized cell wall deposition. Required for establishment of the Casparian strip membrane domain (CSD) and the subsequent formation of Casparian strips, a cell wall modification of the root endodermis that determines an apoplastic barrier between the intraorganismal apoplasm and the extraorganismal apoplasm and prevents lateral diffusion. This Sorghum bicolor (Sorghum) protein is Casparian strip membrane protein 4.